Here is a 144-residue protein sequence, read N- to C-terminus: Large ribosomal subunit protein uL13 (144 aa).

It belongs to the universal ribosomal protein uL13 family. Part of the 50S ribosomal subunit.

This protein is one of the early assembly proteins of the 50S ribosomal subunit, although it is not seen to bind rRNA by itself. It is important during the early stages of 50S assembly. The polypeptide is Large ribosomal subunit protein uL13 (Clostridium novyi (strain NT)).